The sequence spans 157 residues: Probable Brix domain-containing ribosomal biogenesis protein (157 aa).

In terms of domain architecture, Brix spans 1–157 (MLVTSSRKPS…KLNLRGFKKY (157 aa)).

Its function is as follows. Probably involved in the biogenesis of the ribosome. The chain is Probable Brix domain-containing ribosomal biogenesis protein from Methanosarcina barkeri (strain Fusaro / DSM 804).